The primary structure comprises 106 residues: Cyclin-dependent protein kinase inhibitor SMR15 (106 aa).

In terms of biological role, probable cyclin-dependent protein kinase (CDK) inhibitor that functions as a repressor of mitosis in the endoreduplication cell cycle. The protein is Cyclin-dependent protein kinase inhibitor SMR15 of Arabidopsis thaliana (Mouse-ear cress).